The chain runs to 269 residues: MLHIPPENVWIALAVTLAAGLATAIGSLLVLFSRRPNPRLLAFGLAFAGGAMVYVSLSEILNKSIASFALAYGERTGFTYGTLAFLLGVIVIVLIDHFIPNPHDSLDKQDPAFRENSREYLKRVALLTSIAITAHNFPEGLATFFATLESPSVGMPLAFAIAIHNIPEGIAIAVPVYFATQNKFYAFSASLLSGLAEPVGAALGYWLLSGSLSHATFGWVFGLIAGVMVFLALDELLPAAKRYAKGHETVYGLVAGMGTLAISLVLFKW.

8 consecutive transmembrane segments (helical) span residues 11 to 31 (IALA…LLVL), 40 to 60 (LLAF…LSEI), 80 to 100 (YGTL…HFIP), 125 to 145 (ALLT…ATFF), 158 to 178 (AFAI…PVYF), 187 to 207 (FSAS…GYWL), 217 to 237 (FGWV…DELL), and 249 to 269 (TVYG…LFKW). The Fe(2+) site is built by asparagine 136 and glutamate 139. Residues glutamate 139 and histidine 164 each coordinate Zn(2+). Residues asparagine 165, glutamate 168, and glutamate 197 each contribute to the Fe(2+) site. Glutamate 168 lines the Zn(2+) pocket.

It belongs to the ZIP transporter (TC 2.A.5) family. ZupT subfamily.

It localises to the cell inner membrane. It carries out the reaction Zn(2+)(in) = Zn(2+)(out). Functionally, mediates zinc uptake. May also transport other divalent cations. The chain is Zinc transporter ZupT from Stenotrophomonas maltophilia (strain R551-3).